The chain runs to 93 residues: Uteroglobin (93 aa).

The first 17 residues, 1–17 (MKLAITIILVMLSVCYS), serve as a signal peptide directing secretion.

Belongs to the secretoglobin family. In terms of assembly, antiparallel homodimer; disulfide-linked. Interaction with LMBR1L is controversial.

The protein resides in the secreted. In terms of biological role, binds phosphatidylcholine, phosphatidylinositol, polychlorinated biphenyls (PCB) and weakly progesterone, potent inhibitor of phospholipase A2. The polypeptide is Uteroglobin (SCGB1A1) (Neotomodon alstoni (Mexican volcano mouse)).